The sequence spans 3122 residues: tRNA nuclease CdiA-2 (3122 aa).

Positions 36-205 (RAGVVPAWLS…ATLTTGNPNF (170 aa)) are two-partner system transport domain (TPS). The chain crosses the membrane as a helical span at residues 54 to 74 (VALAVLVAAGVVPIWVNAQVV). The tract at residues 256 to 1254 (VVAGSNQVDY…GGSVAIQASG (999 aa)) is FHA-1. Residues 492 to 512 (GMTLGGGSLSNQGGRANSQGP) form a disordered region. The segment covering 500–512 (LSNQGGRANSQGP) has biased composition (polar residues). A receptor binding domain (RBD) region spans residues 1345–1635 (TRRVMQTSGN…SATAVNVLSN (291 aa)). Residues 1790–1845 (TAGNIDLKNTQVFTNSGTVKADTTLALQGKQIDNAFGALQSGGLTSLDTTGNVDLT) form a periplasmic FHA-1 repeat (pFR) region. The tract at residues 1947-2085 (SDTDLNSATG…TERHVYNSRE (139 aa)) is FHA-2. 3 disordered regions span residues 2002 to 2031 (TSTI…ALTG), 2151 to 2174 (TTSQ…MSGG), and 2325 to 2352 (IGVQ…GSSI). The segment at 2086–2825 (THSRSGVVSG…SAGAAMASNV (740 aa)) is pretoxin (PT) domain. Low complexity-rich tracts occupy residues 2151–2170 (TTSQ…HSGL) and 2325–2341 (IGVQ…MQSS). Positions 2342–2352 (EDQTIQRGSSI) are enriched in polar residues. The interval 2821-3122 (MASNVELYNA…NITIIKPKGN (302 aa)) is C-terminal effector domain (CT), has tRNA nuclease activity. The short motif at 2826–2829 (ELYN) is the ELYN C-terminal motif element. A disordered region spans residues 2948–3000 (GATDRTPPSNAILSNSNSDNNSTQGSQSGTVTKTPNPEATGSLSGKPTQIPPL). The segment at 2948–3122 (GATDRTPPSN…NITIIKPKGN (175 aa)) is truncated CT domain, has tRNA nuclease activity, sufficient for interaction with CdiI-2. Residues 2953–2994 (TPPSNAILSNSNSDNNSTQGSQSGTVTKTPNPEATGSLSGKP) show a composition bias toward polar residues. The has tRNase activity stretch occupies residues 2987 to 3122 (TGSLSGKPTQ…NITIIKPKGN (136 aa)). Residues E3012, D3039, D3048, and K3067 contribute to the active site.

This sequence in the N-terminal section; belongs to the CdiA toxin family. As to quaternary structure, interacts with cognate immunity protein CdiI, which blocks its tRNA nuclease activity. The truncated CT fragment (residues 2948-3122) specifically interacts with cognate CdiI which inhibits the tRNA nuclease activity. The truncated CT is more stable in vitro than the original CT fragment characterized in E.coli.

It localises to the membrane. It is found in the secreted. The protein resides in the target cell. Its subcellular location is the target cell cytoplasm. Its function is as follows. Toxic component of a toxin-immunity protein module, which functions as a cellular contact-dependent growth inhibition (CDI) system. CDI modules allow bacteria to communicate with and inhibit the growth of closely related neighboring bacteria in a contact-dependent fashion. The C-terminal 301 residues (the CT fragment) cleaves near the C-terminus of E.coli tRNA1B(Ala), probably preventing tRNA charging, and inhibits growth in E.coli. A truncated CT fragment (residues 2948-3122) has tRNA endonuclease activity on several B.thailandensis tRNAs as well as tRNA2(Arg) where it cleaves after A-70 and U-71. Inactive CT domain binds tRNA, probably in a 1:1 complex. Toxic activity is neutralized by coexpression of the cognate immunity protein CdiI in E.coli, but not by non-cognate immunity proteins from other strains of B.pseudomallei. May use lipopolysaccharide as its target cell receptor. Probably gains access to the cytoplasm of target cells (B.thailandensis strain E264) by using integral inner membrane protein BTH_II0599. Protein BTH_I0359 is also implicated in an unknown fashion in CDI in B.thailandensis strain E264. Functionally, expression of this cdiAIB locus in B.thailandensis confers protection against other bacteria carrying the locus; growth inhibition requires cellular contact. The CdiA protein is thought to be exported from the cell through the central lumen of CdiB, the other half of its two-partner system (TPS). The TPS domain probably remains associated with CdiB while the FHA-1 domain forms an extended filament with the receptor-binding domain (RBD) at its extremity; in the secretion arrested state the C-terminus of the RBD domain form a hairpin-like structure as the FHA-2, PT and CT domains are periplasmic. Upon binding to a target cell outer membrane receptor (possibly a lipoprotein in this CDI) a signal is transmitted to activate secretion. The filament elongates slightly, the rest of CdiA is secreted and the FHA-2 domain becomes stably associated with the target cell's outer membrane where it facilitates entry of the toxic CT domain into the target cell periplasm. From there the toxic CT domain is cleaved and gains access to the target cell cytoplasm via an inner membrane protein (probably inner membrane protein BTH_II0599). This chain is tRNA nuclease CdiA-2 (cdiA2), found in Burkholderia pseudomallei (strain 1026b).